Here is a 210-residue protein sequence, read N- to C-terminus: LexA repressor (210 aa).

Positions 25–44 (AGQVAQEVGITKQAISQQVN) form a DNA-binding region, H-T-H motif. Residues serine 120 and lysine 159 each act as for autocatalytic cleavage activity in the active site.

This sequence belongs to the peptidase S24 family. Homodimer.

The enzyme catalyses Hydrolysis of Ala-|-Gly bond in repressor LexA.. Represses a number of genes involved in the response to DNA damage (SOS response), including recA and lexA. In the presence of single-stranded DNA, RecA interacts with LexA causing an autocatalytic cleavage which disrupts the DNA-binding part of LexA, leading to derepression of the SOS regulon and eventually DNA repair. The protein is LexA repressor of Deinococcus radiodurans (strain ATCC 13939 / DSM 20539 / JCM 16871 / CCUG 27074 / LMG 4051 / NBRC 15346 / NCIMB 9279 / VKM B-1422 / R1).